The sequence spans 293 residues: Protein YIF1A (293 aa).

Residues 1–27 (MAYHSAYGVHGSKHRTRAAPDPPPLFD) form a disordered region. N-acetylalanine is present on A2. Residues 2 to 138 (AYHSAYGVHG…PPRKDLNAPD (137 aa)) lie on the Cytoplasmic side of the membrane. S12 carries the phosphoserine modification. A helical transmembrane segment spans residues 139–159 (LYIPTMAFITYVLLAGMALGI). Over 160–174 (QQRFSPEVLGLCAST) the chain is Lumenal. The helical transmembrane segment at 175-195 (ALVWVFMEVLALLLGLYLATV) threads the bilayer. The Cytoplasmic portion of the chain corresponds to 196 to 203 (RSELSTFH). The helical transmembrane segment at 204–226 (LLAYSGYKYVGMILSVLTGLLFG) threads the bilayer. Residues 227–229 (SDG) lie on the Lumenal side of the membrane. Residues 230-249 (YYVALAWTSSALMYFIVRSL) form a helical membrane-spanning segment. Topologically, residues 250–271 (RTAASGPDSMGGPAPRQRLQLY) are cytoplasmic. Residues 272–292 (LTLGAAAFQPLIIYWLTFHLV) form a helical membrane-spanning segment.

The protein belongs to the YIF1 family. As to quaternary structure, interacts with YIPF5.

It localises to the endoplasmic reticulum membrane. The protein resides in the golgi apparatus membrane. The protein localises to the endoplasmic reticulum-Golgi intermediate compartment membrane. Its function is as follows. Possible role in transport between endoplasmic reticulum and Golgi. The sequence is that of Protein YIF1A (Yif1a) from Mus musculus (Mouse).